A 347-amino-acid chain; its full sequence is Heat-inducible transcription repressor HrcA (347 aa).

This sequence belongs to the HrcA family.

Negative regulator of class I heat shock genes (grpE-dnaK-dnaJ and groELS operons). Prevents heat-shock induction of these operons. This is Heat-inducible transcription repressor HrcA from Lactococcus lactis subsp. lactis (strain IL1403) (Streptococcus lactis).